Here is a 171-residue protein sequence, read N- to C-terminus: Terminase, small subunit (171 aa).

Belongs to the P23virus small terminase family. As to quaternary structure, homononamer; forms a ring-like structure through which genomic DNA is translocated into the capsid. Heterodimer with the terminase large subunit; the active complex is probably heterooligomeric.

The terminase small subunit binds to the packaging initiation site and regulates the ATPase activity of the terminase large subunit. The terminase lies at a unique vertex of the procapsid and is composed of two subunits, a small terminase subunit involved in viral DNA recognition (packaging sequence), and a large terminase subunit. Both terminase subunits heterooligomerize and are docked on the portal protein to form the packaging machine. The protein is Terminase, small subunit of Thermus phage G20c (Thermus thermophilus phage G20c).